The following is a 203-amino-acid chain: Endo-type membrane-bound lytic murein transglycosylase A (203 aa).

The signal sequence occupies residues 1-15 (MKLRWFAFLIVLLAG). A lipid anchor (N-palmitoyl cysteine) is attached at C16. C16 is lipidated: S-diacylglycerol cysteine.

Belongs to the transglycosylase Slt family.

It is found in the cell outer membrane. The enzyme catalyses Endolytic cleavage of the (1-&gt;4)-beta-glycosidic linkage between N-acetylmuramic acid (MurNAc) and N-acetylglucosamine (GlcNAc) residues in peptidoglycan with concomitant formation of a 1,6-anhydrobond in the MurNAc residue.. Functionally, murein-degrading enzyme. May play a role in recycling of muropeptides during cell elongation and/or cell division. Preferentially cleaves at a distance of more than two disaccharide units from the ends of the glycan chain. This chain is Endo-type membrane-bound lytic murein transglycosylase A, found in Shigella boydii serotype 4 (strain Sb227).